We begin with the raw amino-acid sequence, 318 residues long: Polyprenal reductase (318 aa).

The Cytoplasmic portion of the chain corresponds to 1–19 (MAPWAAAQLWALNPLRALW). A helical transmembrane segment spans residues 20-40 (LTLAAAFLLTLLLQLVPPGLL). Topologically, residues 41–80 (PGCALFQDLIRYGKTKREGQSRPAVCRVFDVPKRYFSHFY) are lumenal. Residues 81 to 101 (IISALWNGFLLWHLTQSVFLG) form a helical membrane-spanning segment. Over 102–119 (VPFPNWLHGLLRILGASQ) the chain is Cytoplasmic. Residues 120–140 (FQGGELALSAFLVLVFLWLHS) form a helical membrane-spanning segment. Over 141–156 (LRRLFECFYVSVFSNT) the chain is Lumenal. Residues 157–177 (VIHIVQYCFGLVYYVLTGLTV) form a helical membrane-spanning segment. Residues 178 to 194 (LSQVPMDGRNAYVIGKN) are Cytoplasmic-facing. Residues 195-215 (LLMQARWFHILGMLMFIWSSV) form a helical membrane-spanning segment. Over 216 to 265 (HQYKCHVILGNLRKNKAGVVIHCNHRIPFGDWFEYVSSPNYLAELMIYIS) the chain is Lumenal. The chain crosses the membrane as a helical span at residues 266 to 286 (MAVTFGFHNLTWWLVVTYVFF). Residues 287–318 (SQALSAFLSHKFYKSKFVSYPKHRKAFLPFLF) lie on the Cytoplasmic side of the membrane.

Belongs to the steroid 5-alpha reductase family. Polyprenal reductase subfamily.

The protein resides in the endoplasmic reticulum membrane. It catalyses the reaction a di-trans,poly-cis-dolichal + NADP(+) = a di-trans,poly-cis-polyprenal + NADPH + H(+). The enzyme catalyses a 3-oxo-5alpha-steroid + NADP(+) = a 3-oxo-Delta(4)-steroid + NADPH + H(+). It carries out the reaction androst-4-ene-3,17-dione + NADPH + H(+) = 5alpha-androstan-3,17-dione + NADP(+). The catalysed reaction is 17beta-hydroxy-5alpha-androstan-3-one + NADP(+) = testosterone + NADPH + H(+). It functions in the pathway protein modification; protein glycosylation. Plays a key role in early steps of protein N-linked glycosylation by being involved in the conversion of polyprenol into dolichol. Acts as a polyprenal reductase that mediates the reduction of polyprenal into dolichal in a NADP-dependent mechanism. Dolichols are required for the synthesis of dolichol-linked monosaccharides and the oligosaccharide precursor used for N-glycosylation. Also able to convert testosterone (T) into 5-alpha-dihydrotestosterone (DHT). The chain is Polyprenal reductase (SRD5A3) from Ailuropoda melanoleuca (Giant panda).